We begin with the raw amino-acid sequence, 306 residues long: uncharacterized protein (306 aa).

This sequence to M.jannaschii MJ0658.

This is an uncharacterized protein from Methanothermobacter thermautotrophicus (strain ATCC 29096 / DSM 1053 / JCM 10044 / NBRC 100330 / Delta H) (Methanobacterium thermoautotrophicum).